Reading from the N-terminus, the 321-residue chain is Probable endolytic peptidoglycan transglycosylase RlpA (321 aa).

This sequence belongs to the RlpA family.

Functionally, lytic transglycosylase with a strong preference for naked glycan strands that lack stem peptides. The polypeptide is Probable endolytic peptidoglycan transglycosylase RlpA (Synechocystis sp. (strain ATCC 27184 / PCC 6803 / Kazusa)).